The chain runs to 567 residues: MTMIGWLQIILFCVIIVALTKPLGWYMTRVFNGERTFLSPVLRPIEAGIYWISGVDERREQHWLTYTVAMLLFHVGGFLVIYGVMRLQAVLPFNPAGQSAVAQDLSFNTAISFITNTNWQNYGGESTLSYLVQMLGLTHQNFLSAATGIALAMALIRGFSRASVRTVGNFWVDVTRCTLYVLLPICVVYTLFLVWQGIPQTLGDYVEATTLEGAKQTIAVGPVASQVAIKMLGTNGGGFFNANAAHPFENPTALSNFVQMLSIFALGAALTNVFGRMVGNQRQGWAILAVMGVLFVAGVAVTYWAEANGTSTMHALGLTGGNMEGKEVRFGLVASSLFAVITTAASCGAVNAMHDSFTALGGMIPLINMQLGEIIVGGVGAGLYGMLLFVVLAIFVAGLMVGRTPEYVGKKIEAREVKMAMLAILVLPLMYLGWTAVGVVYPAAVASMANAGPHGFTEVLYAFTSATGNNGSAFAGLTGNTLFYNLTLASAMFVGRFFMIVPAMAIAGSLAAKKSIPPSAGTFPTTGGLFVGLVVGVILIIGGLTFFPALALGPIVEHLAMNAGQVF.

The next 12 helical transmembrane spans lie at 3-23, 64-84, 136-156, 179-199, 220-240, 254-274, 285-305, 330-350, 374-394, 420-440, 488-508, and 527-547; these read MIGWLQIILFCVIIVALTKPL, LTYTVAMLLFHVGGFLVIYGV, GLTHQNFLSAATGIALAMALI, LYVLLPICVVYTLFLVWQGIP, VGPVASQVAIKMLGTNGGGFF, LSNFVQMLSIFALGAALTNVF, WAILAVMGVLFVAGVAVTYWA, FGLVASSLFAVITTAASCGAV, IIVGGVGAGLYGMLLFVVLAI, AMLAILVLPLMYLGWTAVGVV, LASAMFVGRFFMIVPAMAIAG, and GGLFVGLVVGVILIIGGLTFF.

This sequence belongs to the KdpA family. In terms of assembly, the system is composed of three essential subunits: KdpA, KdpB and KdpC.

The protein localises to the cell inner membrane. Functionally, part of the high-affinity ATP-driven potassium transport (or Kdp) system, which catalyzes the hydrolysis of ATP coupled with the electrogenic transport of potassium into the cytoplasm. This subunit binds the periplasmic potassium ions and delivers the ions to the membrane domain of KdpB through an intramembrane tunnel. In Bradyrhizobium diazoefficiens (strain JCM 10833 / BCRC 13528 / IAM 13628 / NBRC 14792 / USDA 110), this protein is Potassium-transporting ATPase potassium-binding subunit.